Here is a 107-residue protein sequence, read N- to C-terminus: Small ribosomal subunit protein bS16 (107 aa).

Positions 85-107 are disordered; that stretch reads REARNNPEKAVPRKERKAAEAGK.

The protein belongs to the bacterial ribosomal protein bS16 family.

The chain is Small ribosomal subunit protein bS16 from Rhodopseudomonas palustris (strain BisB5).